We begin with the raw amino-acid sequence, 497 residues long: Probable cytosol aminopeptidase (497 aa).

Residues Lys-264 and Asp-269 each coordinate Mn(2+). Residue Lys-276 is part of the active site. The Mn(2+) site is built by Asp-287, Asp-346, and Glu-348. Arg-350 is an active-site residue.

Belongs to the peptidase M17 family. The cofactor is Mn(2+).

Its subcellular location is the cytoplasm. The enzyme catalyses Release of an N-terminal amino acid, Xaa-|-Yaa-, in which Xaa is preferably Leu, but may be other amino acids including Pro although not Arg or Lys, and Yaa may be Pro. Amino acid amides and methyl esters are also readily hydrolyzed, but rates on arylamides are exceedingly low.. The catalysed reaction is Release of an N-terminal amino acid, preferentially leucine, but not glutamic or aspartic acids.. Its function is as follows. Presumably involved in the processing and regular turnover of intracellular proteins. Catalyzes the removal of unsubstituted N-terminal amino acids from various peptides. The polypeptide is Probable cytosol aminopeptidase (Persephonella marina (strain DSM 14350 / EX-H1)).